A 322-amino-acid polypeptide reads, in one-letter code: Cytochrome c biogenesis protein CcsA (322 aa).

A run of 6 helical transmembrane segments spans residues 9–29 (ILTHISFSTISIVITIHLITL), 44–64 (GMIVTFFSITGFLVSRWASSG), 143–163 (MLLSYATLLGGPPLSAAILII), 226–246 (VISLGFTLLTGGILGGAVWAN), 259–276 (ETWAFITWTIFAIYLHSR), and 289–309 (IASIGFLIIWICYFGINLLGI).

The protein belongs to the CcmF/CycK/Ccl1/NrfE/CcsA family. May interact with Ccs1.

Its subcellular location is the plastid. It is found in the chloroplast thylakoid membrane. Required during biogenesis of c-type cytochromes (cytochrome c6 and cytochrome f) at the step of heme attachment. The protein is Cytochrome c biogenesis protein CcsA of Triticum aestivum (Wheat).